A 369-amino-acid polypeptide reads, in one-letter code: Anhydro-N-acetylmuramic acid kinase (369 aa).

12–19 (GTSMDGVD) serves as a coordination point for ATP.

It belongs to the anhydro-N-acetylmuramic acid kinase family.

The catalysed reaction is 1,6-anhydro-N-acetyl-beta-muramate + ATP + H2O = N-acetyl-D-muramate 6-phosphate + ADP + H(+). Its pathway is amino-sugar metabolism; 1,6-anhydro-N-acetylmuramate degradation. It participates in cell wall biogenesis; peptidoglycan recycling. Its function is as follows. Catalyzes the specific phosphorylation of 1,6-anhydro-N-acetylmuramic acid (anhMurNAc) with the simultaneous cleavage of the 1,6-anhydro ring, generating MurNAc-6-P. Is required for the utilization of anhMurNAc either imported from the medium or derived from its own cell wall murein, and thus plays a role in cell wall recycling. The sequence is that of Anhydro-N-acetylmuramic acid kinase from Shewanella halifaxensis (strain HAW-EB4).